We begin with the raw amino-acid sequence, 63 residues long: MAKDTNKTVKVRLVRGLRGTQSRHRLSVRALGLNKLNDVRELKDSPQVRGLINTVHYLVKVEE.

Belongs to the universal ribosomal protein uL30 family. Part of the 50S ribosomal subunit.

This Xanthomonas axonopodis pv. citri (strain 306) protein is Large ribosomal subunit protein uL30.